The following is a 459-amino-acid chain: GTPase Der (459 aa).

2 consecutive EngA-type G domains span residues 4 to 169 (PLVA…PEVA) and 179 to 355 (IAVA…AAHR). GTP is bound by residues 10 to 17 (GRPNVGKS), 57 to 61 (DTGGL), 120 to 123 (NKCE), 185 to 192 (GRPNVGKS), 232 to 236 (DTAGI), and 297 to 300 (NKWD). The KH-like domain maps to 356-441 (KRIATSVVNE…PIRFRWRSKS (86 aa)).

It belongs to the TRAFAC class TrmE-Era-EngA-EngB-Septin-like GTPase superfamily. EngA (Der) GTPase family. Associates with the 50S ribosomal subunit.

Its function is as follows. GTPase that plays an essential role in the late steps of ribosome biogenesis. This Synechococcus sp. (strain JA-3-3Ab) (Cyanobacteria bacterium Yellowstone A-Prime) protein is GTPase Der.